The following is a 719-amino-acid chain: UvrABC system protein B (719 aa).

Residues 49-435 (RRINAGERDV…TGGEFVEQVI (387 aa)) enclose the Helicase ATP-binding domain. ATP is bound at residue 62–69 (GATGTGKS). A Beta-hairpin motif is present at residues 115–138 (YYDYYQPEAYIAQTDTYIEKDSSI). A Helicase C-terminal domain is found at 453-606 (QIDDLIGEIR…QIAYNEANGI (154 aa)). Residues 635–654 (GGSGRNASRGRRAQGEPGRA) are disordered. The UVR domain occupies 674-709 (ADLIKDLTAQMMAAARDLQFELAARFRDEIADLKRE).

Belongs to the UvrB family. Forms a heterotetramer with UvrA during the search for lesions. Interacts with UvrC in an incision complex.

It is found in the cytoplasm. The UvrABC repair system catalyzes the recognition and processing of DNA lesions. A damage recognition complex composed of 2 UvrA and 2 UvrB subunits scans DNA for abnormalities. Upon binding of the UvrA(2)B(2) complex to a putative damaged site, the DNA wraps around one UvrB monomer. DNA wrap is dependent on ATP binding by UvrB and probably causes local melting of the DNA helix, facilitating insertion of UvrB beta-hairpin between the DNA strands. Then UvrB probes one DNA strand for the presence of a lesion. If a lesion is found the UvrA subunits dissociate and the UvrB-DNA preincision complex is formed. This complex is subsequently bound by UvrC and the second UvrB is released. If no lesion is found, the DNA wraps around the other UvrB subunit that will check the other stand for damage. The chain is UvrABC system protein B from Mycobacterium tuberculosis (strain CDC 1551 / Oshkosh).